A 462-amino-acid polypeptide reads, in one-letter code: tRNA modification GTPase MnmE (462 aa).

(6S)-5-formyl-5,6,7,8-tetrahydrofolate-binding residues include R27, E89, and R128. Residues 223-383 (GLKIAIVGRP…LEAAILAAVG (161 aa)) form the TrmE-type G domain. GTP contacts are provided by residues 233 to 238 (NVGKSS), 252 to 258 (TDLPGRT), and 277 to 280 (DTAG). Positions 237 and 258 each coordinate Mg(2+). K462 contacts (6S)-5-formyl-5,6,7,8-tetrahydrofolate.

Belongs to the TRAFAC class TrmE-Era-EngA-EngB-Septin-like GTPase superfamily. TrmE GTPase family. As to quaternary structure, homodimer. Heterotetramer of two MnmE and two MnmG subunits. It depends on K(+) as a cofactor.

It is found in the cytoplasm. Functionally, exhibits a very high intrinsic GTPase hydrolysis rate. Involved in the addition of a carboxymethylaminomethyl (cmnm) group at the wobble position (U34) of certain tRNAs, forming tRNA-cmnm(5)s(2)U34. The polypeptide is tRNA modification GTPase MnmE (Synechococcus sp. (strain ATCC 27144 / PCC 6301 / SAUG 1402/1) (Anacystis nidulans)).